Here is a 183-residue protein sequence, read N- to C-terminus: Ribonuclease H (183 aa).

The RNase H type-1 domain maps to 2-151 (SQARFIAFSD…VDQLAQAAAR (150 aa)). The Mg(2+) site is built by Asp-11, Glu-57, Asp-79, and Asp-143.

Belongs to the RNase H family. As to quaternary structure, monomer. The cofactor is Mg(2+).

Its subcellular location is the cytoplasm. The enzyme catalyses Endonucleolytic cleavage to 5'-phosphomonoester.. Endonuclease that specifically degrades the RNA of RNA-DNA hybrids. The chain is Ribonuclease H from Anaeromyxobacter dehalogenans (strain 2CP-1 / ATCC BAA-258).